A 959-amino-acid polypeptide reads, in one-letter code: Vacuolar membrane protease (959 aa).

Over 1 to 13 (MARLNPLSFTPGP) the chain is Cytoplasmic. Residues 14–34 (VIFFTCAVYIALFAALLTVHL) traverse the membrane as a helical segment. Over 35–378 (RVPDYPSKTP…KVFVVFQLHT (344 aa)) the chain is Vacuolar. N-linked (GlcNAc...) asparagine glycans are attached at residues N48, N102, and N105. Residues 128 to 149 (GSEDDEPYHSPQSSPPGERRLD) form a disordered region. 2 residues coordinate Zn(2+): H158 and D170. The active-site Proton acceptor is the E204. Zn(2+) contacts are provided by E205, E230, and H303. A helical transmembrane segment spans residues 379 to 399 (MFALCVTLLVVAPLFLIGLTF). At 400–432 (GLSKADKNYLFARKAYMYSSDDDHPVHLYGWRG) the chain is on the cytoplasmic side. Residues 433–453 (FFRFPIVFSIATAVVVGLAYL) traverse the membrane as a helical segment. Residues 454 to 463 (MVRLNPLILY) lie on the Vacuolar side of the membrane. Residues 464–484 (SSPYAVWSMMLSAWFSVAWFF) traverse the membrane as a helical segment. Over 485–498 (SRGASAMRPSALQR) the chain is Cytoplasmic. A helical membrane pass occupies residues 499 to 519 (MYALIWLFAGSFALLAFVTVL). Over 520–524 (SNNYQ) the chain is Vacuolar. The helical transmembrane segment at 525–545 (VAGGYFALFYFAGIFLALVLS) threads the bilayer. Residues 546–645 (YLELFFAPTK…YPGEQDWSGK (100 aa)) are Cytoplasmic-facing. Disordered stretches follow at residues 566–594 (DEPVSRPLTGTTTAARSEEPPIADDDATE) and 606–635 (FARHSGRRDSIDDENGNRDEEPVQLDLKQP). The span at 612 to 626 (RRDSIDDENGNRDEE) shows a compositional bias: basic and acidic residues. Residues 646–666 (LPGWLWLLQLLLVAPIVVILV) traverse the membrane as a helical segment. Over 667–688 (GQIALLLTSALHQTPADGNSSL) the chain is Vacuolar. Residue N685 is glycosylated (N-linked (GlcNAc...) asparagine). Residues 689–709 (FVYLAFALLTTLLLAPIGPFI) traverse the membrane as a helical segment. Over 710–716 (HRFTWHV) the chain is Cytoplasmic. Residues 717-737 (PTFVFLVCVATVIYNLVAFPF) form a helical membrane-spanning segment. Residues 738-959 (SREHRLKVYF…LVEGFKYFQV (222 aa)) lie on the Vacuolar side of the membrane. N-linked (GlcNAc...) asparagine glycosylation is found at N785, N818, N834, N864, and N899.

The protein belongs to the peptidase M28 family. Zn(2+) is required as a cofactor.

It is found in the vacuole membrane. Its function is as follows. May be involved in vacuolar sorting and osmoregulation. This Phaeosphaeria nodorum (strain SN15 / ATCC MYA-4574 / FGSC 10173) (Glume blotch fungus) protein is Vacuolar membrane protease.